A 349-amino-acid chain; its full sequence is Anthranilate phosphoribosyltransferase (349 aa).

Residues G82, 85–86 (GD), 92–95 (NVST), 110–118 (KHGNRAVSG), and S122 contribute to the 5-phospho-alpha-D-ribose 1-diphosphate site. An anthranilate-binding site is contributed by G82. Residue S94 coordinates Mg(2+). N113 serves as a coordination point for anthranilate. R168 contributes to the anthranilate binding site. Positions 227 and 228 each coordinate Mg(2+).

Belongs to the anthranilate phosphoribosyltransferase family. Homodimer. The cofactor is Mg(2+).

The catalysed reaction is N-(5-phospho-beta-D-ribosyl)anthranilate + diphosphate = 5-phospho-alpha-D-ribose 1-diphosphate + anthranilate. It functions in the pathway amino-acid biosynthesis; L-tryptophan biosynthesis; L-tryptophan from chorismate: step 2/5. Catalyzes the transfer of the phosphoribosyl group of 5-phosphorylribose-1-pyrophosphate (PRPP) to anthranilate to yield N-(5'-phosphoribosyl)-anthranilate (PRA). The polypeptide is Anthranilate phosphoribosyltransferase (Pseudomonas fluorescens (strain SBW25)).